Reading from the N-terminus, the 788-residue chain is MAQRNGMSPRPPPLGRGRGAGGPSGVGSSPPSSCVPMGAPSTAGTGASAAATTTPGHGVHRVEPRGPPGAPPSSGNNSNFWHGPERLLLSQIPVERQALTELEYQAMGAVWRAAFLANSTGRAMRKWSQRDAGTLLPLGRPYGFYARVTPRSQMNGVGATDLRQLSPRDAWIVLVATVVHEVDPAADPTLGDKAGHPEGLCAQDGLYLALGAGFRVFVYDLANNTLILAARDADEWFRHGAGEVVRLYRCNRLGVGTPRATLLPQPALRQTLLRAEEATALGRELRRRWAGTTVALQTPGRRLQPMVLLGAWQELAQYEPFASAPHPASLLTAVRRHLNQRLCCGWLALGAVLPARWLGCAAGPATGTAAGTTSPPAASGTETEAAGGDAPCAIAGAVGSAVPVPPQPYGAAGGGAICVPNADAHAVVGADAAAAAAPTVMVGSTAMAGPAASGTVPRAMLVVLLDELGAVFGYCPLDGHVYPLAAELSHFLRAGVLGALALGRESAPAAEAARRLLPELDREQWERPRWDALHLHPRAALWAREPHGQLAFLLRPGRGEAEVLTLATKHPAICANVEDYLQDARRRADAQALGLDLATVVMEAGGQMIHKKTKKPKGKEDESLMKGKHSRYTRPTEPPLTPQASLGRALRRDDEDWKPSRLPGEDSWYDLDETFWVLGSNRKNDVYQRRWKKTVLRCGLEIDRPMPTVPKGCRPQTFTHEGIQLMGGATQEPLDTGLYAPSHVTSAFVPSVYMPPTVPYPDPAARLCRDMRRVTFSNIATHYHYNAQ.

3 disordered regions span residues 1-82 (MAQR…NFWH), 366-385 (TGTAAGTTSPPAASGTETEA), and 609-663 (IHKK…SRLP). Gly residues predominate over residues 16-25 (RGRGAGGPSG). Positions 26-56 (VGSSPPSSCVPMGAPSTAGTGASAAATTTPG) are enriched in low complexity. Residues 74–248 (SGNNSNFWHG…HGAGEVVRLY (175 aa)) are RNA-binding. A compositionally biased stretch (basic and acidic residues) spans 650-659 (LRRDDEDWKP). Residues 671–788 (LDETFWVLGS…IATHYHYNAQ (118 aa)) are interaction with host EIF2AK2/PKR.

This sequence belongs to the herpesviridae US22 family. In terms of assembly, interacts with host EIF2AK2/PKR; this interaction retains EIF2AK2 to the host nucleus and prevents its activation. Interaction (via N-terminus) with host BECN1; this interaction inhibits host autophagy. Interacts with the viral DNA polymerase accessory subunit UL44. Interacts with host HSPA5.

The protein localises to the virion. The protein resides in the host cytoplasm. It is found in the host nucleus. Functionally, inhibits the establishment of the antiviral state and the integrated stress response (ISR) in the infected cell. Prevents the phosphorylation of the host eukaryotic translation initiation factor eIF-2alpha/EIF2S1 and thus the shutoff of viral and cellular protein synthesis by directly interacting with EIF2AK2/PKR. Prevents stress granule formation in response to eIF-2alpha/EIF2S1 phosphorylation, thereby rescuing viral replication and protein synthesis. Also inhibits host autophagy by interacting with host Beclin-1/BECN1. This Homo sapiens (Human) protein is Protein HHLF1 (TRS1).